The chain runs to 411 residues: Multidrug resistance protein MdtG (411 aa).

A run of 10 helical transmembrane segments spans residues 14–34, 56–76, 89–109, 113–133, 144–164, 171–191, 219–239, 254–274, 288–308, and 376–396; these read LFVA…IMPF, LVFS…GGLA, ALGM…WQFL, AVLG…ATQV, TLST…GLLA, PVFY…LLYV, ILSL…IAPI, LAFV…MSAP, ILVF…FVQT, and AVFC…WWCL.

It belongs to the major facilitator superfamily. DHA1 family. MdtG (TC 2.A.1.2.20) subfamily.

The protein resides in the cell inner membrane. The sequence is that of Multidrug resistance protein MdtG from Serratia proteamaculans (strain 568).